A 463-amino-acid chain; its full sequence is V-type ATP synthase beta chain (463 aa).

It belongs to the ATPase alpha/beta chains family.

Produces ATP from ADP in the presence of a proton gradient across the membrane. The V-type beta chain is a regulatory subunit. In Halothermothrix orenii (strain H 168 / OCM 544 / DSM 9562), this protein is V-type ATP synthase beta chain.